The sequence spans 101 residues: Large ribosomal subunit protein uL23 (101 aa).

This sequence belongs to the universal ribosomal protein uL23 family. In terms of assembly, part of the 50S ribosomal subunit. Contacts protein L29, and trigger factor when it is bound to the ribosome.

Functionally, one of the early assembly proteins it binds 23S rRNA. One of the proteins that surrounds the polypeptide exit tunnel on the outside of the ribosome. Forms the main docking site for trigger factor binding to the ribosome. In Lactobacillus helveticus (strain DPC 4571), this protein is Large ribosomal subunit protein uL23.